Reading from the N-terminus, the 372-residue chain is GTPase Obg (372 aa).

The 159-residue stretch at 1–159 (MKFIDEARIE…RMLKLELKVL (159 aa)) folds into the Obg domain. The segment at 128 to 147 (LHFKSSTNRAPRQKTDGKPG) is disordered. Residues 160–334 (ADVGLLGMPN…LVYAIHDYLV (175 aa)) form the OBG-type G domain. GTP-binding positions include 166 to 173 (GMPNAGKS), 191 to 195 (FTTLA), 213 to 216 (DIPG), 284 to 287 (NKLD), and 315 to 317 (SAL). Mg(2+) contacts are provided by Ser173 and Thr193.

The protein belongs to the TRAFAC class OBG-HflX-like GTPase superfamily. OBG GTPase family. As to quaternary structure, monomer. Mg(2+) is required as a cofactor.

The protein localises to the cytoplasm. An essential GTPase which binds GTP, GDP and possibly (p)ppGpp with moderate affinity, with high nucleotide exchange rates and a fairly low GTP hydrolysis rate. Plays a role in control of the cell cycle, stress response, ribosome biogenesis and in those bacteria that undergo differentiation, in morphogenesis control. The sequence is that of GTPase Obg from Burkholderia pseudomallei (strain 668).